A 411-amino-acid chain; its full sequence is UPF0754 membrane protein Npun_R4433 (411 aa).

Helical transmembrane passes span Trp-3–Thr-23 and Ile-387–Val-407.

Belongs to the UPF0754 family.

It is found in the cell inner membrane. In Nostoc punctiforme (strain ATCC 29133 / PCC 73102), this protein is UPF0754 membrane protein Npun_R4433.